Consider the following 316-residue polypeptide: Cilia-and flagella-associated protein 96 (316 aa).

A disordered region spans residues 220–242 (EEKKEVSFKPFKPSSPGKKAGGM). The span at 227–237 (FKPFKPSSPGK) shows a compositional bias: low complexity.

The protein belongs to the CFAP96 family.

It localises to the cytoplasm. It is found in the cytoskeleton. Its subcellular location is the microtubule organizing center. The protein resides in the centrosome. This Mus musculus (Mouse) protein is Cilia-and flagella-associated protein 96 (Cfap96).